Here is a 391-residue protein sequence, read N- to C-terminus: Formate-dependent phosphoribosylglycinamide formyltransferase (391 aa).

Residues 20-21 and E80 contribute to the N(1)-(5-phospho-beta-D-ribosyl)glycinamide site; that span reads EL. Residues R112, K153, 158–163, 193–196, and E201 contribute to the ATP site; these read SSGKGQ and EGFI. Positions 117–306 constitute an ATP-grasp domain; sequence RLAAETLGLP…EFALHVRAIL (190 aa). Mg(2+) contacts are provided by E265 and E277. N(1)-(5-phospho-beta-D-ribosyl)glycinamide-binding positions include D284, K354, and 361-362; that span reads RR.

This sequence belongs to the PurK/PurT family. As to quaternary structure, homodimer.

The enzyme catalyses N(1)-(5-phospho-beta-D-ribosyl)glycinamide + formate + ATP = N(2)-formyl-N(1)-(5-phospho-beta-D-ribosyl)glycinamide + ADP + phosphate + H(+). Its pathway is purine metabolism; IMP biosynthesis via de novo pathway; N(2)-formyl-N(1)-(5-phospho-D-ribosyl)glycinamide from N(1)-(5-phospho-D-ribosyl)glycinamide (formate route): step 1/1. Involved in the de novo purine biosynthesis. Catalyzes the transfer of formate to 5-phospho-ribosyl-glycinamide (GAR), producing 5-phospho-ribosyl-N-formylglycinamide (FGAR). Formate is provided by PurU via hydrolysis of 10-formyl-tetrahydrofolate. The protein is Formate-dependent phosphoribosylglycinamide formyltransferase of Shewanella oneidensis (strain ATCC 700550 / JCM 31522 / CIP 106686 / LMG 19005 / NCIMB 14063 / MR-1).